The chain runs to 680 residues: Harmonin-binding protein USHBP1 (680 aa).

Residues 1–15 (MSARATRPRSRRGRH) are compositionally biased toward basic residues. Disordered stretches follow at residues 1-101 (MSAR…GPAE), 135-162 (PVEAEDRDPGAPGSFGNEEEASGPGQQE), and 217-250 (ASPPPSMLRAGRRNSNSSSSGAERRPWAPQDSPM). Residues 76–86 (PEERREPEVEA) are compositionally biased toward basic and acidic residues. Coiled coils occupy residues 177 to 219 (LGTR…EASP), 362 to 386 (ATNGDLQAAEKEASRLLVKKEVAMD), and 479 to 506 (LADLVLRLQLAQREKRGLELREAALRAQ). The disordered stretch occupies residues 524 to 562 (LMGDGSSGGSSEDPSSEEEAGEDRQQHYQGPPALLGGQM). Residues 573–661 (QELSASLTRA…QQAEELAVLT (89 aa)) adopt a coiled-coil conformation.

It belongs to the MCC family. Interacts via its C-terminus with the first PDZ domain of USH1C.

The sequence is that of Harmonin-binding protein USHBP1 from Rattus norvegicus (Rat).